We begin with the raw amino-acid sequence, 472 residues long: Divinyl ether synthase CYP74 (472 aa).

Heme is bound at residue cysteine 425.

This sequence belongs to the cytochrome P450 family. Heme is required as a cofactor. As to expression, expressed mainly in bulbs, and at lower levels in roots.

It catalyses the reaction (13S)-hydroperoxy-(9Z,11E)-octadecadienoate = etheroleate + H2O. It carries out the reaction (13S)-hydroperoxy-(9Z,11E,15Z)-octadecatrienoate = etherolenate + H2O. The catalysed reaction is (9S)-hydroperoxy-(10E,12Z)-octadecadienoate = colneleate + H2O. The enzyme catalyses (9S)-hydroperoxy-(10E,12Z,15Z)-octadecatrienoate = colnelenate + H2O. Its pathway is lipid metabolism; oxylipin biosynthesis. Functionally, divinyl ether synthase involved in oxylipin biosynthesis. Catalyzes the conversion of (13S)-hydroperoxy-(9Z,11E)-octadecadienoate (13-HPOD) to etheroleate and (13S)-hydroperoxy-(9Z,11E,15Z)-octadecatrienoate (13-HPOT) to etherolenate. Catalyzes the conversion of (9S)-hydroperoxy-(10E,12Z)-octadecadienoate (9-HPOD) to colneleate and (9S)-hydroperoxy-(10E,12Z,15Z)-octadecatrienoate (9-HPOT) colnelenate. This Allium sativum (Garlic) protein is Divinyl ether synthase CYP74.